We begin with the raw amino-acid sequence, 1299 residues long: Nuclear factor related to kappa-B-binding protein (1299 aa).

The DEUBAD domain occupies 39 to 156; the sequence is PEDLLEDPEI…LKQILASRSD (118 aa). Disordered regions lie at residues 163–187 and 204–232; these read RSGP…REWR and GDTA…PAVP. Positions 216–232 are enriched in low complexity; the sequence is SSWLPSSPARSPSPAVP. A phosphoserine mark is found at S228 and S298. K327 participates in a covalent cross-link: Glycyl lysine isopeptide (Lys-Gly) (interchain with G-Cter in SUMO2). S351 is subject to Phosphoserine. The interval 370-495 is winged-helix like domain; sequence LGINEISSSF…FCKQENEDSS (126 aa). Residue K469 forms a Glycyl lysine isopeptide (Lys-Gly) (interchain with G-Cter in SUMO2) linkage. K488 participates in a covalent cross-link: Glycyl lysine isopeptide (Lys-Gly) (interchain with G-Cter in SUMO1); alternate. Residue K488 forms a Glycyl lysine isopeptide (Lys-Gly) (interchain with G-Cter in SUMO2); alternate linkage. Disordered regions lie at residues 669-760, 882-902, and 1017-1043; these read AAKA…SSSG, LPAT…TSAP, and VHAA…TVVK. Composition is skewed to low complexity over residues 677 to 688, 695 to 715, and 723 to 733; these read QQKPKPPSKVKS, IKVL…DSSM, and VTPTTPALPAI. Positions 744 to 760 are enriched in polar residues; sequence NKSGPSTVSEPAKSSSG. Low complexity-rich tracts occupy residues 892-902 and 1019-1043; these read PATSSPGTSAP and AADS…TVVK. S1022 is subject to Phosphoserine. Residue K1237 is modified to N6-acetyllysine. Position 1291 is a phosphoserine (S1291).

This sequence belongs to the NFRKB family. Component of the chromatin remodeling INO80 complex; specifically part of a complex module associated with the N-terminus of INO80. Interacts with UCHL5; NFRKB competes with ADRM1 for interaction with UCHL5. Expressed in thymus, brain, testes, spleen and liver.

The protein localises to the nucleus. Binds to the DNA consensus sequence 5'-GGGGAATCTCC-3'. Functionally, putative regulatory component of the chromatin remodeling INO80 complex which is involved in transcriptional regulation, DNA replication and probably DNA repair. Modulates the deubiquitinase activity of UCHL5 in the INO80 complex. This is Nuclear factor related to kappa-B-binding protein (NFRKB) from Homo sapiens (Human).